Reading from the N-terminus, the 226-residue chain is LexA repressor (226 aa).

A DNA-binding region (H-T-H motif) is located at residues 28-48 (RAEICQSLGFRSPNAAESHLR). Catalysis depends on for autocatalytic cleavage activity residues Ser-133 and Lys-170.

The protein belongs to the peptidase S24 family. Homodimer.

The enzyme catalyses Hydrolysis of Ala-|-Gly bond in repressor LexA.. Its function is as follows. Represses a number of genes involved in the response to DNA damage (SOS response), including recA and lexA. In the presence of single-stranded DNA, RecA interacts with LexA causing an autocatalytic cleavage which disrupts the DNA-binding part of LexA, leading to derepression of the SOS regulon and eventually DNA repair. The polypeptide is LexA repressor (Halorhodospira halophila (strain DSM 244 / SL1) (Ectothiorhodospira halophila (strain DSM 244 / SL1))).